The primary structure comprises 434 residues: Citrate synthase (434 aa).

Active-site residues include histidine 310 and aspartate 368.

Belongs to the citrate synthase family.

It carries out the reaction oxaloacetate + acetyl-CoA + H2O = citrate + CoA + H(+). It participates in carbohydrate metabolism; tricarboxylic acid cycle; isocitrate from oxaloacetate: step 1/2. The chain is Citrate synthase (gltA) from Bradyrhizobium diazoefficiens (strain JCM 10833 / BCRC 13528 / IAM 13628 / NBRC 14792 / USDA 110).